We begin with the raw amino-acid sequence, 415 residues long: Phosphoglycerate kinase (415 aa).

Residues valine 23, aspartate 24, phenylalanine 25, asparagine 26, glutamine 39, arginine 40, serine 63, histidine 64, glycine 66, arginine 67, leucine 122, arginine 123, and arginine 170 each coordinate (2R)-3-phosphoglycerate. Glycine 213 contributes to the ADP binding site. Glycine 213 is a CDP binding site. 2 residues coordinate AMP: alanine 214 and lysine 215. Alanine 214 provides a ligand contact to ATP. Position 214 (alanine 214) interacts with Mg(2+). Aspartate 218 lines the CDP pocket. Aspartate 218 is a binding site for Mg(2+). Lysine 219 serves as a coordination point for AMP. Lysine 219 provides a ligand contact to ATP. Position 237 (glycine 237) interacts with ADP. Glycine 237 provides a ligand contact to CDP. Residues glycine 238 and glycine 311 each coordinate AMP. Positions 238 and 311 each coordinate ATP. 2 residues coordinate CDP: glycine 336 and phenylalanine 341. Phenylalanine 341 is a binding site for ADP. Glutamate 342 provides a ligand contact to AMP. Positions 342, 373, and 374 each coordinate ATP. Position 373 (aspartate 373) interacts with Mg(2+).

This sequence belongs to the phosphoglycerate kinase family. As to quaternary structure, monomer. The cofactor is Mg(2+).

Its subcellular location is the cytoplasm. It is found in the mitochondrion. It carries out the reaction (2R)-3-phosphoglycerate + ATP = (2R)-3-phospho-glyceroyl phosphate + ADP. It participates in carbohydrate degradation; glycolysis; pyruvate from D-glyceraldehyde 3-phosphate: step 2/5. Functionally, catalyzes one of the two ATP producing reactions in the glycolytic pathway via the reversible conversion of 1,3-diphosphoglycerate to 3-phosphoglycerate. Both L- and D- forms of purine and pyrimidine nucleotides can be used as substrates, but the activity is much lower on pyrimidines. Negatively regulates the biosynthesis of acetyl-CoA from pyruvate in the mitochondrion. The polypeptide is Phosphoglycerate kinase (PGKA) (Penicillium chrysogenum (Penicillium notatum)).